A 185-amino-acid polypeptide reads, in one-letter code: Elongation factor P (185 aa).

The protein belongs to the elongation factor P family.

Its subcellular location is the cytoplasm. It functions in the pathway protein biosynthesis; polypeptide chain elongation. Functionally, involved in peptide bond synthesis. Stimulates efficient translation and peptide-bond synthesis on native or reconstituted 70S ribosomes in vitro. Probably functions indirectly by altering the affinity of the ribosome for aminoacyl-tRNA, thus increasing their reactivity as acceptors for peptidyl transferase. The protein is Elongation factor P of Mesoplasma florum (strain ATCC 33453 / NBRC 100688 / NCTC 11704 / L1) (Acholeplasma florum).